We begin with the raw amino-acid sequence, 355 residues long: Mitochondrial import inner membrane translocase subunit TIM50 (355 aa).

The N-terminal 44 residues, 1–44 (MAASAAVFLRLRSGLRQGARGLCARLATPPPRAPDQAAEIGSRA), are a transit peptide targeting the mitochondrion. The disordered stretch occupies residues 25–61 (RLATPPPRAPDQAAEIGSRAGTKAQTQGPQQQRSSEG). The Mitochondrial matrix segment spans residues 45–67 (GTKAQTQGPQQQRSSEGPSYAKK). Polar residues predominate over residues 47-61 (KAQTQGPQQQRSSEG). A helical membrane pass occupies residues 68 to 88 (VALWLARLLGAGGTVSVIYIF). Residues 89–355 (GNNAVDENGA…SRLWPRSKQP (267 aa)) are Mitochondrial intermembrane-facing. Residues 145-288 (YYQPPYTLVL…LDLSAFLKTI (144 aa)) form the FCP1 homology domain. Phosphoserine is present on serine 343.

This sequence belongs to the TIM50 family. Component of the TIM23 complex at least composed of TIMM23, TIMM17 (TIMM17A or TIMM17B) and TIMM50; within this complex, directly interacts with TIMM23. The complex interacts with the TIMM44 component of the PAM complex and with DNAJC15.

It is found in the mitochondrion inner membrane. Functionally, essential component of the TIM23 complex, a complex that mediates the translocation of transit peptide-containing proteins across the mitochondrial inner membrane. Has some phosphatase activity in vitro; however such activity may not be relevant in vivo. This chain is Mitochondrial import inner membrane translocase subunit TIM50 (TIMM50), found in Bos taurus (Bovine).